The primary structure comprises 284 residues: Homeobox-leucine zipper protein HAT4 (284 aa).

The span at 48–59 shows a compositional bias: polar residues; it reads ESFTSSVPNSDS. Positions 48-132 are disordered; the sequence is ESFTSSVPNS…DGDNSRKKLR (85 aa). Over residues 89-100 the composition is skewed to low complexity; it reads VSSPNSTVSSST. Positions 126–185 form a DNA-binding region, homeobox; the sequence is NSRKKLRLSKDQSAILEETFKDHSTLNPKQKQALAKQLGLRARQVEVWFQNRRARTKLKQ. The segment at 193–214 is leucine-zipper; it reads LRRCCENLTEENRRLQKEVTEL.

Belongs to the HD-ZIP homeobox family. Class II subfamily. Interacts with DNA as homodimer. As to expression, predominantly expressed in leaves and stems.

It localises to the nucleus. In terms of biological role, probable transcription factor involved in the negative regulation of cell elongation and specific cell proliferation processes such as lateral root formation and secondary growth of the vascular system. Acts as a mediator of the red/far-red light effects on leaf cell expansion in the shading response. Binds to the DNA sequence 5'-CAAT[GC]ATTG-3'. Negatively regulates its own expression. This Arabidopsis thaliana (Mouse-ear cress) protein is Homeobox-leucine zipper protein HAT4 (HAT4).